Reading from the N-terminus, the 342-residue chain is Protein pelota homolog (342 aa).

This sequence belongs to the eukaryotic release factor 1 family. Pelota subfamily. Monomer. The cofactor is a divalent metal cation.

The protein resides in the cytoplasm. May function in recognizing stalled ribosomes, interact with stem-loop structures in stalled mRNA molecules, and effect endonucleolytic cleavage of the mRNA. May play a role in the release non-functional ribosomes and degradation of damaged mRNAs. Has endoribonuclease activity. The chain is Protein pelota homolog from Sulfolobus acidocaldarius (strain ATCC 33909 / DSM 639 / JCM 8929 / NBRC 15157 / NCIMB 11770).